The sequence spans 272 residues: 1,4-dihydroxy-6-naphtoate synthase (272 aa).

Substrate-binding positions include 55 to 57 (KLS) and 107 to 108 (TA). His145 acts as the Proton acceptor in catalysis.

It belongs to the MqnA/MqnD family. MqnD subfamily.

The enzyme catalyses cyclic dehypoxanthinylfutalosinate = 1,4-dihydroxy-6-naphthoate + dihydroxyacetone. Its pathway is quinol/quinone metabolism; menaquinone biosynthesis. Functionally, catalyzes the conversion of cyclic dehypoxanthine futalosine (cyclic DHFL) into 1,4-dihydroxy-6-naphthoate, a step in the biosynthesis of menaquinone (MK, vitamin K2). This is 1,4-dihydroxy-6-naphtoate synthase from Thermus thermophilus (strain ATCC 27634 / DSM 579 / HB8).